A 337-amino-acid polypeptide reads, in one-letter code: Trace amine-associated receptor 5 (337 aa).

Residues 1-38 lie on the Extracellular side of the membrane; the sequence is MRAVLLPGSGEQPAAFCYQVNGSCPRTVHPLAIRVLIY. N21 carries an N-linked (GlcNAc...) asparagine glycan. 2 disulfides stabilise this stretch: C24/C188 and C99/C192. The chain crosses the membrane as a helical span at residues 39–59; it reads LACAVGMLITVLGNLFVVFAV. Topologically, residues 60–70 are cytoplasmic; sequence SYFKVLHTPTN. Residues 71–91 form a helical membrane-spanning segment; sequence FLLLSLALADMLLGLLVLPLS. Residues 92–109 are Extracellular-facing; it reads TVRSVESCWFFGDFLCRL. The helical transmembrane segment at 110 to 130 threads the bilayer; the sequence is HTYLDTLFCLTSIFHLCFISI. The Cytoplasmic segment spans residues 131–154; it reads DRHCAICDPLLYPSKFTVRIALRY. Residues 155-175 traverse the membrane as a helical segment; sequence IAAGWGIPAAYTAFFLYTDVV. The segment at 176-189 is extracellular Loop 2 (ECL2); the sequence is ERALSQWLEEMPCV. Topologically, residues 176–204 are extracellular; the sequence is ERALSQWLEEMPCVGSCQLLFNKFWGWLN. A helical membrane pass occupies residues 205-225; the sequence is FPAFFIPCLIMISLYLKIFVV. Residues 226–253 lie on the Cytoplasmic side of the membrane; sequence ATRQAQQIRTLSQSLSGAVKRERKAAKT. Residues 254 to 274 form a helical membrane-spanning segment; it reads LGIAVGIYLVCWLPFTVDTLV. The Extracellular portion of the chain corresponds to 275–284; sequence DSLLNFVTPP. Residues 285-307 form a helical membrane-spanning segment; the sequence is LVFDIFIWFAYFNSACNPIIYVF. Residues 308–337 are Cytoplasmic-facing; the sequence is SYRWFRKALKLLLSREILSPRTQTADLFHD.

Belongs to the G-protein coupled receptor 1 family.

Its subcellular location is the cell membrane. Olfactory receptor specific for trimethylamine, a trace amine enriched in the urine of male rats, playing a role in social behavior. Also activated by N-methylpiperidine. Trimethylamine is present at high concentration in the urine of male after puberty and acts as an attractant. Trimethylamine-binding causes a conformation change that triggers signaling via G(s)-class of G alpha proteins (GNAL or GNAS). Also required to provide olfactory input into limbic brain areas to regulate emotional behaviors likely via modulation of the serotonin system. This is Trace amine-associated receptor 5 from Rattus norvegicus (Rat).